Consider the following 334-residue polypeptide: Holliday junction branch migration complex subunit RuvB (334 aa).

Residues 4–184 are large ATPase domain (RuvB-L); the sequence is EDRLISGTQK…FGIVQRLEYY (181 aa). ATP-binding positions include isoleucine 23, arginine 24, glycine 65, lysine 68, threonine 69, threonine 70, 131-133, arginine 174, tyrosine 184, and arginine 221; that span reads EDY. Residue threonine 69 participates in Mg(2+) binding. The small ATPAse domain (RuvB-S) stretch occupies residues 185 to 255; the sequence is DLKSLTRIVL…VAKLALDMLE (71 aa). A head domain (RuvB-H) region spans residues 258-334; it reads NEGFDYMDRK…YLHFGFDKPQ (77 aa). Arginine 313 and arginine 318 together coordinate DNA.

The protein belongs to the RuvB family. As to quaternary structure, homohexamer. Forms an RuvA(8)-RuvB(12)-Holliday junction (HJ) complex. HJ DNA is sandwiched between 2 RuvA tetramers; dsDNA enters through RuvA and exits via RuvB. An RuvB hexamer assembles on each DNA strand where it exits the tetramer. Each RuvB hexamer is contacted by two RuvA subunits (via domain III) on 2 adjacent RuvB subunits; this complex drives branch migration. In the full resolvosome a probable DNA-RuvA(4)-RuvB(12)-RuvC(2) complex forms which resolves the HJ.

The protein localises to the cytoplasm. It carries out the reaction ATP + H2O = ADP + phosphate + H(+). Functionally, the RuvA-RuvB-RuvC complex processes Holliday junction (HJ) DNA during genetic recombination and DNA repair, while the RuvA-RuvB complex plays an important role in the rescue of blocked DNA replication forks via replication fork reversal (RFR). RuvA specifically binds to HJ cruciform DNA, conferring on it an open structure. The RuvB hexamer acts as an ATP-dependent pump, pulling dsDNA into and through the RuvAB complex. RuvB forms 2 homohexamers on either side of HJ DNA bound by 1 or 2 RuvA tetramers; 4 subunits per hexamer contact DNA at a time. Coordinated motions by a converter formed by DNA-disengaged RuvB subunits stimulates ATP hydrolysis and nucleotide exchange. Immobilization of the converter enables RuvB to convert the ATP-contained energy into a lever motion, pulling 2 nucleotides of DNA out of the RuvA tetramer per ATP hydrolyzed, thus driving DNA branch migration. The RuvB motors rotate together with the DNA substrate, which together with the progressing nucleotide cycle form the mechanistic basis for DNA recombination by continuous HJ branch migration. Branch migration allows RuvC to scan DNA until it finds its consensus sequence, where it cleaves and resolves cruciform DNA. The chain is Holliday junction branch migration complex subunit RuvB from Psychromonas ingrahamii (strain DSM 17664 / CCUG 51855 / 37).